The following is a 156-amino-acid chain: Snaclec A1 (156 aa).

A signal peptide spans M1–A23. 3 disulfide bridges follow: C27–C38, C55–C154, and C129–C146. Residues H34–E155 enclose the C-type lectin domain.

It belongs to the snaclec family. Heterodimer; disulfide-linked. Expressed by the venom gland.

The protein localises to the secreted. Functionally, interferes with one step of hemostasis (modulation of platelet aggregation, or coagulation cascade, for example). The polypeptide is Snaclec A1 (Macrovipera lebetinus (Levantine viper)).